The following is a 487-amino-acid chain: Fatty acid desaturase 2-like protein FADS2B (487 aa).

The span at M1–E11 shows a compositional bias: basic and acidic residues. The interval M1 to C20 is disordered. Over M1 to R175 the chain is Cytoplasmic. A Cytochrome b5 heme-binding domain is found at L62–S139. Heme-binding residues include H97 and H120. A helical transmembrane segment spans residues F176 to H196. Topologically, residues H197–S201 are lumenal. The helical transmembrane segment at W202 to L222 threads the bilayer. The Cytoplasmic portion of the chain corresponds to Q223–H307. The Histidine box-1 motif lies at H224 to H228. The short motif at H261–H265 is the Histidine box-2 element. A helical transmembrane segment spans residues L308–M328. Over Q329 to R349 the chain is Lumenal. A helical membrane pass occupies residues Y350 to V370. At K371–E487 the chain is on the cytoplasmic side. Residues Q426–H430 carry the Histidine box-3 motif.

It belongs to the fatty acid desaturase type 1 family.

Its subcellular location is the endoplasmic reticulum membrane. It functions in the pathway lipid metabolism; polyunsaturated fatty acid biosynthesis. The sequence is that of Fatty acid desaturase 2-like protein FADS2B from Mus musculus (Mouse).